We begin with the raw amino-acid sequence, 1205 residues long: Nitric oxide synthase 3 (1205 aa).

Positions 1–73 are disordered; it reads MGNLKSVGQE…PPDGPKFPRV (73 aa). Glycine 2 is lipidated: N-myristoyl glycine. Residues cysteine 15 and cysteine 26 are each lipidated (S-palmitoyl cysteine). Over residues 15–27 the composition is skewed to gly residues; sequence CGLGLGLGLGLCG. Positions 44 to 54 are enriched in pro residues; the sequence is LAPPPSPPPAP. The Zn(2+) site is built by cysteine 96 and cysteine 101. The interaction with NOSIP stretch occupies residues 100-488; sequence RCLGSLVFPR…TDPWKGSASK (389 aa). Serine 104 contacts (6R)-L-erythro-5,6,7,8-tetrahydrobiopterin. At serine 116 the chain carries Phosphoserine; by CDK5. Cysteine 186 is a heme b binding site. Positions 249, 358, 359, 363, and 368 each coordinate L-arginine. The (6R)-L-erythro-5,6,7,8-tetrahydrobiopterin site is built by alanine 448, tryptophan 449, and phenylalanine 462. Tyrosine 477 provides a ligand contact to heme b. Residues 492–512 are calmodulin-binding; that stretch reads VTRKKTFKEVANAVKISASLM. A Phosphothreonine; by AMPK modification is found at threonine 497. Residues 522 to 705 enclose the Flavodoxin-like domain; it reads ATILYGSETG…AFGGWAQAAF (184 aa). The FMN site is built by serine 528, glutamate 529, threonine 530, arginine 532, serine 574, and threonine 575. A phosphoserine mark is found at serine 617, serine 635, and serine 640. FMN contacts are provided by serine 656, cysteine 663, glutamate 689, and glutamine 693. Residues 758–1004 enclose the FAD-binding FR-type domain; the sequence is RKMVQATVLA…IRGAPSFRLP (247 aa). Arginine 778 contacts NADP(+). Histidine 800 is an FAD binding site. The interval 819-850 is disordered; that stretch reads VEDPPPPGEPVAVEQLEKGSPGGPPPSWVRDP. Position 838 is a phosphoserine (serine 838). FAD-binding residues include arginine 940, tyrosine 942, serine 943, threonine 958, alanine 960, tyrosine 964, valine 977, cysteine 978, and serine 979. NADP(+) contacts are provided by threonine 1018, arginine 1051, serine 1080, arginine 1081, lysine 1087, tyrosine 1089, and glutamine 1091. Threonine 1177 is modified (phosphothreonine). The residue at position 1179 (serine 1179) is a Phosphoserine; by AMPK. Serine 1181 bears the Phosphoserine mark.

Belongs to the NOS family. In terms of assembly, homodimer. Interacts with NOSIP and NOSTRIN. Interacts with HSP90AB1. Forms a complex with ASL, ASS1 and SLC7A1; the complex regulates cell-autonomous L-arginine synthesis and citrulline recycling while channeling extracellular L-arginine to nitric oxide synthesis pathway. It depends on heme b as a cofactor. The cofactor is FAD. Requires FMN as cofactor. (6R)-L-erythro-5,6,7,8-tetrahydrobiopterin is required as a cofactor. Post-translationally, phosphorylation by AMPK at Ser-1179 in the presence of Ca(2+)-calmodulin (CaM) activates activity. In absence of Ca(2+)-calmodulin, AMPK also phosphorylates Thr-497, resulting in inhibition of activity. Phosphorylation of Ser-116 by CDK5 reduces activity.

The protein localises to the membrane. It localises to the caveola. The protein resides in the cytoplasm. Its subcellular location is the cytoskeleton. It is found in the golgi apparatus. The protein localises to the cell membrane. The enzyme catalyses 2 L-arginine + 3 NADPH + 4 O2 + H(+) = 2 L-citrulline + 2 nitric oxide + 3 NADP(+) + 4 H2O. Stimulated by calcium/calmodulin. Inhibited by NOSIP and NOSTRIN. In terms of biological role, produces nitric oxide (NO) which is implicated in vascular smooth muscle relaxation through a cGMP-mediated signal transduction pathway. NO mediates vascular endothelial growth factor (VEGF)-induced angiogenesis in coronary vessels and promotes blood clotting through the activation of platelets. In Canis lupus familiaris (Dog), this protein is Nitric oxide synthase 3 (NOS3).